The sequence spans 398 residues: uncharacterized protein (398 aa).

The N-terminal stretch at 1 to 22 (MKLKFYKLPLITTAFSFVFLTA) is a signal peptide. Residue cysteine 23 is the site of N-palmitoyl cysteine attachment. The S-diacylglycerol cysteine moiety is linked to residue cysteine 23.

It localises to the cell membrane. This is an uncharacterized protein from Mycoplasma genitalium (strain ATCC 33530 / DSM 19775 / NCTC 10195 / G37) (Mycoplasmoides genitalium).